The sequence spans 344 residues: MRKLFLDAFKHEKLEKPPIWIMRQAGRYLPEYRAVRSKFENFMDMCRNADACCEVALHPLERYDLDAAIVFSDILTIPEAMGMDLKFIKGVGPVFSDPIESEKDLNRLKSAEDSVGDLEYVYNAVRTTKAAINVPLIGFTGSPWTLAAYMVEGSGSKQFSKLRKMMYANPQLMHALLQRLADITVIYLLEQVKAGASSLMIFDTWGGILPLEQYKEFSLKYMEYIAKNVKQKSNVPVVFFTKGGSNFFEELKDKSCDGVGVDWNVTLDQARHRIGVGKVLQGNFDPAFLYGTSDSIRNTVKKNMEFIQSDKLNNYIVNLGHGIYPDINPDNVKIMVDAIREFSV.

Residues 23 to 27 (RQAGR), Asp73, Tyr149, Thr204, and His321 each bind substrate.

Belongs to the uroporphyrinogen decarboxylase family. As to quaternary structure, homodimer.

It localises to the cytoplasm. The catalysed reaction is uroporphyrinogen III + 4 H(+) = coproporphyrinogen III + 4 CO2. Its pathway is porphyrin-containing compound metabolism; protoporphyrin-IX biosynthesis; coproporphyrinogen-III from 5-aminolevulinate: step 4/4. Functionally, catalyzes the decarboxylation of four acetate groups of uroporphyrinogen-III to yield coproporphyrinogen-III. The sequence is that of Uroporphyrinogen decarboxylase from Francisella philomiragia subsp. philomiragia (strain ATCC 25017 / CCUG 19701 / FSC 153 / O#319-036).